Here is a 63-residue protein sequence, read N- to C-terminus: Large ribosomal subunit protein uL29 (63 aa).

Belongs to the universal ribosomal protein uL29 family.

The sequence is that of Large ribosomal subunit protein uL29 from Shewanella baltica (strain OS223).